We begin with the raw amino-acid sequence, 283 residues long: Non-selective voltage-gated ion channel VDAC3 (283 aa).

N-acetylcysteine is present on Cys2. Thr4 bears the Phosphothreonine mark. Residues Lys12, Lys15, and Lys20 each carry the N6-acetyllysine modification. The next 2 beta stranded transmembrane spans lie at 26–35 (MVKIDLRTKS) and 39–47 (VEFSTSGHA). Residue Lys53 forms a Glycyl lysine isopeptide (Lys-Gly) (interchain with G-Cter in ubiquitin) linkage. 3 beta stranded membrane passes run 54 to 64 (ASGNLETKYKV), 69 to 76 (LTFTQKWN), and 80 to 89 (TLGTEISLEN). Lys90 carries the post-translational modification N6-acetyllysine. A beta stranded membrane pass occupies residues 95–104 (LKLTLDTIFV). Glycyl lysine isopeptide (Lys-Gly) (interchain with G-Cter in ubiquitin) cross-links involve residues Lys109 and Lys110. The next 10 beta stranded transmembrane spans lie at 111–120 (SGKLKASYKR), 123–130 (FSLGSNVD), 137–145 (TIYGWAVLA), 150–158 (LAGYQMSFD), 163–175 (KLSQ…GYKA), 178–185 (FQLHTHVN), 189–198 (EFGGSIYQKV), 202–211 (IETSINLAWT), 218–227 (RFGIAAKYKL), and 231–238 (TSLSAKVN). Ser241 carries the post-translational modification Phosphoserine. NAD(+) contacts are provided by residues 242 to 244 (LIG) and 260 to 264 (SALID). 2 consecutive transmembrane segments (beta stranded) span residues 242 to 251 (LIGLGYTQTL) and 254 to 263 (GVKLTLSALI). Lys266 carries the post-translational modification N6-acetyllysine; alternate. Lys266 is covalently cross-linked (Glycyl lysine isopeptide (Lys-Gly) (interchain with G-Cter in ubiquitin); alternate). A beta stranded transmembrane segment spans residues 273-282 (HKVGLGFELE).

It belongs to the eukaryotic mitochondrial porin family. Interacts with ARMC12 in a TBC1D21-dependent manner. Interacts with MISFA. In terms of processing, ubiquitinated by PRKN during mitophagy, leading to its degradation and enhancement of mitophagy. Deubiquitinated by USP30.

It is found in the mitochondrion outer membrane. It localises to the membrane. It catalyses the reaction chloride(in) = chloride(out). The enzyme catalyses K(+)(in) = K(+)(out). Functionally, non-selective voltage-gated ion channel that mediates the transport of anions and cations through the mitochondrion outer membrane and plasma membrane. Forms a high-conducting channel with a stable open state and a voltage-induced closure with a mild preference for anions over cations. Involved in male fertility and sperm mitochondrial sheath formation. This is Non-selective voltage-gated ion channel VDAC3 from Oryctolagus cuniculus (Rabbit).